A 445-amino-acid polypeptide reads, in one-letter code: Trigger factor (445 aa).

The PPIase FKBP-type domain maps to 164–249 (GDQVTFDFEG…VKKVEEAKLP (86 aa)).

The protein belongs to the FKBP-type PPIase family. Tig subfamily.

It is found in the cytoplasm. It catalyses the reaction [protein]-peptidylproline (omega=180) = [protein]-peptidylproline (omega=0). Involved in protein export. Acts as a chaperone by maintaining the newly synthesized protein in an open conformation. Functions as a peptidyl-prolyl cis-trans isomerase. This Psychrobacter sp. (strain PRwf-1) protein is Trigger factor.